A 407-amino-acid polypeptide reads, in one-letter code: UPF0597 protein NAMH_0191 (407 aa).

It belongs to the UPF0597 family.

The sequence is that of UPF0597 protein NAMH_0191 from Nautilia profundicola (strain ATCC BAA-1463 / DSM 18972 / AmH).